We begin with the raw amino-acid sequence, 281 residues long: Large ribosomal subunit protein uL2 (281 aa).

Residues 223 to 281 (VRGSVMNPVDHPHGGGEGKQPVGRKSPLTPWGKIALGVKTRKTKKSSNKLILRRRKDAK) are disordered. The span at 261-281 (KTRKTKKSSNKLILRRRKDAK) shows a compositional bias: basic residues.

This sequence belongs to the universal ribosomal protein uL2 family. As to quaternary structure, part of the 50S ribosomal subunit. Forms a bridge to the 30S subunit in the 70S ribosome.

Its function is as follows. One of the primary rRNA binding proteins. Required for association of the 30S and 50S subunits to form the 70S ribosome, for tRNA binding and peptide bond formation. It has been suggested to have peptidyltransferase activity; this is somewhat controversial. Makes several contacts with the 16S rRNA in the 70S ribosome. The polypeptide is Large ribosomal subunit protein uL2 (Mycoplasmopsis synoviae (strain 53) (Mycoplasma synoviae)).